Reading from the N-terminus, the 154-residue chain is 3-hydroxyacyl-[acyl-carrier-protein] dehydratase FabZ (154 aa).

Histidine 54 is a catalytic residue.

It belongs to the thioester dehydratase family. FabZ subfamily.

It is found in the cytoplasm. The enzyme catalyses a (3R)-hydroxyacyl-[ACP] = a (2E)-enoyl-[ACP] + H2O. In terms of biological role, involved in unsaturated fatty acids biosynthesis. Catalyzes the dehydration of short chain beta-hydroxyacyl-ACPs and long chain saturated and unsaturated beta-hydroxyacyl-ACPs. This chain is 3-hydroxyacyl-[acyl-carrier-protein] dehydratase FabZ, found in Chlamydia abortus (strain DSM 27085 / S26/3) (Chlamydophila abortus).